Reading from the N-terminus, the 328-residue chain is 2-oxoglutarate-dependent dioxygenase gloF (328 aa).

The Fe2OG dioxygenase domain occupies 175-289; that stretch reads DTSELRMNHY…RYSVAYFGKP (115 aa). The Fe cation site is built by H201, D203, and H261. R280 is a binding site for 2-oxoglutarate.

It belongs to the iron/ascorbate-dependent oxidoreductase family. Requires Fe(2+) as cofactor.

The protein operates within mycotoxin biosynthesis. Its function is as follows. 2-oxoglutarate-dependent dioxygenase; part of the gene cluster that mediates the biosynthesis of pneumocandins, lipohexapeptides of the echinocandin family that prevent fungal cell wall formation by non-competitive inhibition of beta-1,3-glucan synthase. The 10,12-dimethylmyristoyl side chain is synthesized by the reducing polyketide synthase gloL/GLPKS4. The thioesterase gloN/GLHYD exclusively interacts with gloL/GLPKS4 to maintain turnover of the polyketide side chain. The 10R,12S-dimethylmyristic acid is then transferred to the first thiolation domain of the nonribosomal peptide synthetase gloA/GLNRPS4 by the acyl-AMP ligase gloD/GLligase, followed by its acylation to L-ornithine to trigger elongation of the cyclic hexapeptide. L-ornithine, 4R-hydroxyl-L-proline (generated from L-proline by the dioxygenase gloF/GLOXY2), 3S-hydroxyl-L-homotyrosine (generated by gloG/GLHtyB, gloH/GLHtyA, gloI/GLHtyC, gloJ/GLHtyD and hydroxylated at C-3 by the dioxygenase gloM/GLOXY1), 3R-hydroxyl-L-glutamine (generated from L-glutamine probably by the dioxygenase gloE/GLOXY3) and 3S-hydroxyl-L-proline (generated from L-proline by the dioxygenase gloF/GLOXY2 to yield pneumocandin B0), or 3S-hydroxyl-4S-methyl-L-proline (generated from L-leucine by the dioxygenase gloC/GLOXY4 to yield pneumocandin A0) are sequentially added to the growing chain. The last C domain of gloA/GLNRPS4 is proposed to be responsible for cyclization by condensation to form the peptide bond between L-ornithine and 3S-hydroxyl-4S-methyl-L-proline (for pneumocandin A0) or 3S-hydroxyl-L-proline (for pneumocandin B0). Finally, the subsequent C-4 hydroxylation of 3S-hydroxyl-L-homotyrosine and L-ornithine dihydroxylation at C-4 and C-5 are performed by the cytochrome P450 monooxygenases gloP/GLP450-1 and gloO/GLP450-2, respectively. This is 2-oxoglutarate-dependent dioxygenase gloF from Glarea lozoyensis (strain ATCC 20868 / MF5171).